Here is a 248-residue protein sequence, read N- to C-terminus: Peroxisomal membrane protein 11A (248 aa).

Topologically, residues 1–97 are cytoplasmic; it reads MATKAPEKIT…RSSRWDSNHE (97 aa). A helical membrane pass occupies residues 98–118; sequence LVLLIIAYGGEGLYYFVEQFI. The Lumenal segment spans residues 119–220; that stretch reads WLTKSGLIDA…MTIADIRDGK (102 aa). A helical membrane pass occupies residues 221-241; it reads GVLSAPNVISSAGLFSAIVST. The Cytoplasmic segment spans residues 242 to 248; that stretch reads HKNWISC.

It belongs to the peroxin-11 family. In terms of assembly, homooligomer. Interacts with ARC5 and FIS1B on peroxisomes. As to expression, expressed in developing siliques.

It is found in the peroxisome membrane. Its function is as follows. Involved in peroxisomal proliferation. Promotes peroxisomal duplication, aggregation or elongation without fission. In Arabidopsis thaliana (Mouse-ear cress), this protein is Peroxisomal membrane protein 11A (PEX11A).